The primary structure comprises 457 residues: Argininosuccinate lyase (457 aa).

The protein belongs to the lyase 1 family. Argininosuccinate lyase subfamily.

The protein localises to the cytoplasm. It catalyses the reaction 2-(N(omega)-L-arginino)succinate = fumarate + L-arginine. Its pathway is amino-acid biosynthesis; L-arginine biosynthesis; L-arginine from L-ornithine and carbamoyl phosphate: step 3/3. In Pasteurella multocida (strain Pm70), this protein is Argininosuccinate lyase.